Reading from the N-terminus, the 151-residue chain is Alpha-latroinsectotoxin-Lh1a (151 aa).

8 ANK repeats span residues 21-37, 41-52, 56-80, 84-104, 105-116, 117-125, 126-146, and 147-151; these read TDVT…DLNA, ILIRNTNAVINI, VGLT…YLND, NGMT…VDFL, KWTPLHLAILFK, QLVIELLAK, TFFD…AVEK, and YIAAR.

The protein belongs to the cationic peptide 01 (latrotoxin) family. 02 (alpha-latroinsectotoxin) subfamily. In terms of assembly, homotetramer in membranes. Expressed by the venom gland.

It is found in the secreted. The protein resides in the target cell membrane. In terms of biological role, insecticidal presynaptic neurotoxin that induces massive neurotransmitter release at insect (but not vertebrate) neuromuscular junctions. Native toxin forms cation-permeable pores (with high permeability to calcium) in lipid membranes locust muscle membrane and artificial lipid bilayers. May bind to insect neurexin-1 homolog, insect adhesion G protein-coupled receptor L1 homolog, and insect receptor-type tyrosine-protein phosphatase S homolog, and induces neurotransmitter exocytosis both by forming tetrameric pores in membranes and signaling via G protein-coupled receptor. Oligomerization is a process independent of divalent cations. The toxin forms channels with 0.55-0.58 nm entrance diameter and a relatively small conductance in planar phospholipid membranes. This Latrodectus hasselti (Redback spider) protein is Alpha-latroinsectotoxin-Lh1a.